Consider the following 74-residue polypeptide: NAD(P)H-quinone oxidoreductase subunit O (74 aa).

Belongs to the complex I NdhO subunit family. In terms of assembly, NDH-1 can be composed of about 15 different subunits; different subcomplexes with different compositions have been identified which probably have different functions.

It is found in the cellular thylakoid membrane. The enzyme catalyses a plastoquinone + NADH + (n+1) H(+)(in) = a plastoquinol + NAD(+) + n H(+)(out). It catalyses the reaction a plastoquinone + NADPH + (n+1) H(+)(in) = a plastoquinol + NADP(+) + n H(+)(out). NDH-1 shuttles electrons from an unknown electron donor, via FMN and iron-sulfur (Fe-S) centers, to quinones in the respiratory and/or the photosynthetic chain. The immediate electron acceptor for the enzyme in this species is believed to be plastoquinone. Couples the redox reaction to proton translocation, and thus conserves the redox energy in a proton gradient. Cyanobacterial NDH-1 also plays a role in inorganic carbon-concentration. This Synechococcus sp. (strain RCC307) protein is NAD(P)H-quinone oxidoreductase subunit O.